The primary structure comprises 96 residues: MSAVTRCEDGLVLRLYIQPKASRDSIVGLHGDEVKVAITAPPVDGQANSHLTKFLGKQFRVAKSQIVIEKGELGRHKQVKIIHPQQIPPEIAALTE.

It belongs to the UPF0235 family.

The polypeptide is UPF0235 protein YggU (Salmonella typhi).